Here is a 237-residue protein sequence, read N- to C-terminus: DNA repair protein RecO (237 aa).

The protein belongs to the RecO family.

Involved in DNA repair and RecF pathway recombination. In Rickettsia peacockii (strain Rustic), this protein is DNA repair protein RecO.